The following is a 202-amino-acid chain: MIAIIDYGMGNVGSIKNMIAKIGFDAIITNDPELISKATKLILPGVGSFDSGMTNLKELGLIDILNKKVVQEKTPLLGICLGMHLLTNSSEEGRLKGLGFINAKTVKFKLSNKFKIPHMGWNYVKFSIKNKLSDNLIENSRFYFVHSYYVICEDKKNILMTTEYENEFTSAVSKDNIYGVQFHPEKSHKFGMKLMENFIKQA.

The Glutamine amidotransferase type-1 domain maps to 1-202 (MIAIIDYGMG…KLMENFIKQA (202 aa)). Catalysis depends on C80, which acts as the Nucleophile. Residues H183 and E185 contribute to the active site.

Heterodimer of HisH and HisF.

The protein resides in the cytoplasm. It carries out the reaction 5-[(5-phospho-1-deoxy-D-ribulos-1-ylimino)methylamino]-1-(5-phospho-beta-D-ribosyl)imidazole-4-carboxamide + L-glutamine = D-erythro-1-(imidazol-4-yl)glycerol 3-phosphate + 5-amino-1-(5-phospho-beta-D-ribosyl)imidazole-4-carboxamide + L-glutamate + H(+). It catalyses the reaction L-glutamine + H2O = L-glutamate + NH4(+). It functions in the pathway amino-acid biosynthesis; L-histidine biosynthesis; L-histidine from 5-phospho-alpha-D-ribose 1-diphosphate: step 5/9. Functionally, IGPS catalyzes the conversion of PRFAR and glutamine to IGP, AICAR and glutamate. The HisH subunit provides the glutamine amidotransferase activity that produces the ammonia necessary to HisF for the synthesis of IGP and AICAR. This Methanococcus maripaludis (strain DSM 14266 / JCM 13030 / NBRC 101832 / S2 / LL) protein is Imidazole glycerol phosphate synthase subunit HisH 2 (hisH2).